The primary structure comprises 185 residues: NEDD8-conjugating enzyme UBE2F (185 aa).

The tract at residues 1 to 29 is interaction with UBA3; it reads MLTLASKLKRDDGVRGPRASNPASDSTRR. Positions 11–30 are disordered; the sequence is DDGVRGPRASNPASDSTRRV. In terms of domain architecture, UBC core spans 32–185; the sequence is VRDKLLVKEV…VEDYIKRYAR (154 aa). The active-site Glycyl thioester intermediate is the cysteine 116.

The protein belongs to the ubiquitin-conjugating enzyme family. UBE2F subfamily.

The enzyme catalyses [E1 NEDD8-activating enzyme]-S-[NEDD8 protein]-yl-L-cysteine + [E2 NEDD8-conjugating enzyme]-L-cysteine = [E1 NEDD8-activating enzyme]-L-cysteine + [E2 NEDD8-conjugating enzyme]-S-[NEDD8-protein]-yl-L-cysteine.. The protein operates within protein modification; protein neddylation. In terms of biological role, accepts the ubiquitin-like protein NEDD8 from the UBA3-NAE1 E1 complex and catalyzes its covalent attachment to other proteins. Together with the E3 ubiquitin ligase RNF7/RBX2, specifically neddylates cullin-5 (CUL5). Does not neddylate CUL1, CUL2, CUL3, CUL4A or CUL4B. In Gallus gallus (Chicken), this protein is NEDD8-conjugating enzyme UBE2F (UBE2F).